The primary structure comprises 158 residues: SsrA-binding protein (158 aa).

The protein belongs to the SmpB family.

It is found in the cytoplasm. Functionally, required for rescue of stalled ribosomes mediated by trans-translation. Binds to transfer-messenger RNA (tmRNA), required for stable association of tmRNA with ribosomes. tmRNA and SmpB together mimic tRNA shape, replacing the anticodon stem-loop with SmpB. tmRNA is encoded by the ssrA gene; the 2 termini fold to resemble tRNA(Ala) and it encodes a 'tag peptide', a short internal open reading frame. During trans-translation Ala-aminoacylated tmRNA acts like a tRNA, entering the A-site of stalled ribosomes, displacing the stalled mRNA. The ribosome then switches to translate the ORF on the tmRNA; the nascent peptide is terminated with the 'tag peptide' encoded by the tmRNA and targeted for degradation. The ribosome is freed to recommence translation, which seems to be the essential function of trans-translation. The sequence is that of SsrA-binding protein from Symbiobacterium thermophilum (strain DSM 24528 / JCM 14929 / IAM 14863 / T).